Here is a 224-residue protein sequence, read N- to C-terminus: Octanoyltransferase (224 aa).

The 176-residue stretch at 38-213 folds into the BPL/LPL catalytic domain; sequence SATVDELWWV…YLVRRLGYSA (176 aa). Substrate is bound by residues 77–84, 144–146, and 157–159; these read RGGQVTYH, SLG, and GLS. The active-site Acyl-thioester intermediate is the C175.

Belongs to the LipB family.

It localises to the cytoplasm. The catalysed reaction is octanoyl-[ACP] + L-lysyl-[protein] = N(6)-octanoyl-L-lysyl-[protein] + holo-[ACP] + H(+). Its pathway is protein modification; protein lipoylation via endogenous pathway; protein N(6)-(lipoyl)lysine from octanoyl-[acyl-carrier-protein]: step 1/2. Its function is as follows. Catalyzes the transfer of endogenously produced octanoic acid from octanoyl-acyl-carrier-protein onto the lipoyl domains of lipoate-dependent enzymes. Lipoyl-ACP can also act as a substrate although octanoyl-ACP is likely to be the physiological substrate. The sequence is that of Octanoyltransferase from Nitrosococcus oceani (strain ATCC 19707 / BCRC 17464 / JCM 30415 / NCIMB 11848 / C-107).